The chain runs to 486 residues: E3 ubiquitin-protein ligase RNF8 (486 aa).

The 55-residue stretch at 38–92 (VTVGRGFGVTYQLVSKICPLMISRNHCVLKQNPEGQWTIMDNKSLNGVWLNRARL) folds into the FHA domain. The interval 68 to 72 (QNPEG) is required for interaction with PIWIL1. Ser-157 carries the phosphoserine modification. A compositionally biased stretch (polar residues) spans 180 to 201 (SCESGQSVKSQGKGEVSSTPSE). The segment at 180 to 207 (SCESGQSVKSQGKGEVSSTPSENLDPKL) is disordered. The RING-type zinc-finger motif lies at 404-442 (CIICSEYFIEAVTLNCAHSFCSYCINEWMKRKIECPICR).

Belongs to the RNF8 family. As to quaternary structure, homodimer. Forms a E2-E3 ubiquitin ligase complex composed of the RNF8 homodimer and a E2 heterodimer of UBE2N and UBE2V2. Interacts with class III E2s, including UBE2E1, UBE2E2, and UBE2E3 and with UBE2N. Interacts with RXRA. Interacts (via FHA domain) with phosphorylated HERC2 (via C-terminus). Interacts with PIWIL1; leading to sequester RNF8 in the cytoplasm. Interacts with WRAP53/TCAB1. Autoubiquitinated through 'Lys-48' and 'Lys-63' of ubiquitin. 'Lys-63' polyubiquitination is mediated by UBE2N. 'Lys-29'-type polyubiquitination is also observed, but it doesn't require its own functional RING-type zinc finger.

It localises to the nucleus. Its subcellular location is the cytoplasm. The protein resides in the midbody. The protein localises to the chromosome. It is found in the telomere. The catalysed reaction is S-ubiquitinyl-[E2 ubiquitin-conjugating enzyme]-L-cysteine + [acceptor protein]-L-lysine = [E2 ubiquitin-conjugating enzyme]-L-cysteine + N(6)-ubiquitinyl-[acceptor protein]-L-lysine.. It participates in protein modification; protein ubiquitination. E3 ubiquitin-protein ligase that plays a key role in DNA damage signaling via 2 distinct roles: by mediating the 'Lys-63'-linked ubiquitination of histones H2A and H2AX and promoting the recruitment of DNA repair proteins at double-strand breaks (DSBs) sites, and by catalyzing 'Lys-48'-linked ubiquitination to remove target proteins from DNA damage sites. Following DNA DSBs, it is recruited to the sites of damage by ATM-phosphorylated MDC1 and catalyzes the 'Lys-63'-linked ubiquitination of histones H2A and H2AX, thereby promoting the formation of TP53BP1 and BRCA1 ionizing radiation-induced foci (IRIF). Also controls the recruitment of UIMC1-BRCC3 (RAP80-BRCC36) and PAXIP1/PTIP to DNA damage sites. Promotes the recruitment of NBN to DNA damage sites by catalyzing 'Lys-6'-linked ubiquitination of NBN. Also recruited at DNA interstrand cross-links (ICLs) sites and catalyzes 'Lys-63'-linked ubiquitination of histones H2A and H2AX, leading to recruitment of FAAP20 and Fanconi anemia (FA) complex, followed by interstrand cross-link repair. H2A ubiquitination also mediates the ATM-dependent transcriptional silencing at regions flanking DSBs in cis, a mechanism to avoid collision between transcription and repair intermediates. Promotes the formation of 'Lys-63'-linked polyubiquitin chains via interactions with the specific ubiquitin-conjugating UBE2N/UBC13 and ubiquitinates non-histone substrates such as PCNA. Substrates that are polyubiquitinated at 'Lys-63' are usually not targeted for degradation. Also catalyzes the formation of 'Lys-48'-linked polyubiquitin chains via interaction with the ubiquitin-conjugating UBE2L6/UBCH8, leading to degradation of substrate proteins such as CHEK2, JMJD2A/KDM4A and KU80/XRCC5: it is still unclear how the preference toward 'Lys-48'- versus 'Lys-63'-linked ubiquitination is regulated but it could be due to RNF8 ability to interact with specific E2 specific ligases. For instance, interaction with phosphorylated HERC2 promotes the association between RNF8 and UBE2N/UBC13 and favors the specific formation of 'Lys-63'-linked ubiquitin chains. Promotes non-homologous end joining (NHEJ) by promoting the 'Lys-48'-linked ubiquitination and degradation the of KU80/XRCC5. Following DNA damage, mediates the ubiquitination and degradation of JMJD2A/KDM4A in collaboration with RNF168, leading to unmask H4K20me2 mark and promote the recruitment of TP53BP1 at DNA damage sites. Following DNA damage, mediates the ubiquitination and degradation of POLD4/p12, a subunit of DNA polymerase delta. In the absence of POLD4, DNA polymerase delta complex exhibits higher proofreading activity. In addition to its function in damage signaling, also plays a role in higher-order chromatin structure by mediating extensive chromatin decondensation. Involved in the activation of ATM by promoting histone H2B ubiquitination, which indirectly triggers histone H4 'Lys-16' acetylation (H4K16ac), establishing a chromatin environment that promotes efficient activation of ATM kinase. Required in the testis, where it plays a role in the replacement of histones during spermatogenesis. At uncapped telomeres, promotes the joining of deprotected chromosome ends by inducing H2A ubiquitination and TP53BP1 recruitment, suggesting that it may enhance cancer development by aggravating telomere-induced genome instability in case of telomeric crisis. Promotes the assembly of RAD51 at DNA DSBs in the absence of BRCA1 and TP53BP1 Also involved in class switch recombination in immune system, via its role in regulation of DSBs repair. May be required for proper exit from mitosis after spindle checkpoint activation and may regulate cytokinesis. May play a role in the regulation of RXRA-mediated transcriptional activity. Not involved in RXRA ubiquitination by UBE2E2. The sequence is that of E3 ubiquitin-protein ligase RNF8 from Pongo abelii (Sumatran orangutan).